The sequence spans 221 residues: Max dimerization protein 1 (221 aa).

A Nuclear localization signal motif is present at residues 21–49; the sequence is RREREAEHGYASMLPYNNKDRDALKRRNK. 2 disordered regions span residues 30–68 and 173–204; these read YASM…EKNR and TGDL…YSST. One can recognise a bHLH domain in the interval 56–108; that stretch reads SSRSTHNEMEKNRRAHLRLCLEKLKGLVPLGPESSRHTTLSLLTKAKLHIKKL. Residues 175–184 are compositionally biased toward low complexity; the sequence is DLDWSSSSVS. Over residues 191-204 the composition is skewed to polar residues; the sequence is SMQSLGSDEGYSST.

Heterodimer with MAX; the interaction is required for DNA-binding. DNA binding requires dimerization with another bHLH protein; does not form homodimers, and does not bind to DNA in the absence of MAX in vitro. Interacts with RNF17. Post-translationally, ubiquitinated by BIRC2/c-IAP1, leading to its subsequent degradation by the proteasome.

It localises to the nucleus. In terms of biological role, component of a transcriptional repressor complex together with MAX. In complex with MAX binds to the core DNA sequence 5'-CAC[GA]TG-3'. Antagonizes MYC transcriptional activity by competing with MYC for MAX binding. Binds to the TERT promoter and represses telomerase expression, possibly by interfering with MYC binding. This Homo sapiens (Human) protein is Max dimerization protein 1 (MXD1).